The primary structure comprises 315 residues: Methionyl-tRNA formyltransferase (315 aa).

113 to 116 is a (6S)-5,6,7,8-tetrahydrofolate binding site; sequence SLLP.

This sequence belongs to the Fmt family.

The catalysed reaction is L-methionyl-tRNA(fMet) + (6R)-10-formyltetrahydrofolate = N-formyl-L-methionyl-tRNA(fMet) + (6S)-5,6,7,8-tetrahydrofolate + H(+). Functionally, attaches a formyl group to the free amino group of methionyl-tRNA(fMet). The formyl group appears to play a dual role in the initiator identity of N-formylmethionyl-tRNA by promoting its recognition by IF2 and preventing the misappropriation of this tRNA by the elongation apparatus. The chain is Methionyl-tRNA formyltransferase from Pectobacterium atrosepticum (strain SCRI 1043 / ATCC BAA-672) (Erwinia carotovora subsp. atroseptica).